A 679-amino-acid polypeptide reads, in one-letter code: UvrABC system protein B (679 aa).

The 152-residue stretch at Y25–V176 folds into the Helicase ATP-binding domain. An ATP-binding site is contributed by G38–T45. A Beta-hairpin motif is present at residues Y91–V114. Positions Q429–P591 constitute a Helicase C-terminal domain. A UVR domain is found at P639 to K674.

It belongs to the UvrB family. As to quaternary structure, forms a heterotetramer with UvrA during the search for lesions. Interacts with UvrC in an incision complex.

It is found in the cytoplasm. In terms of biological role, the UvrABC repair system catalyzes the recognition and processing of DNA lesions. A damage recognition complex composed of 2 UvrA and 2 UvrB subunits scans DNA for abnormalities. Upon binding of the UvrA(2)B(2) complex to a putative damaged site, the DNA wraps around one UvrB monomer. DNA wrap is dependent on ATP binding by UvrB and probably causes local melting of the DNA helix, facilitating insertion of UvrB beta-hairpin between the DNA strands. Then UvrB probes one DNA strand for the presence of a lesion. If a lesion is found the UvrA subunits dissociate and the UvrB-DNA preincision complex is formed. This complex is subsequently bound by UvrC and the second UvrB is released. If no lesion is found, the DNA wraps around the other UvrB subunit that will check the other stand for damage. The polypeptide is UvrABC system protein B (Prochlorococcus marinus (strain MIT 9211)).